Reading from the N-terminus, the 503-residue chain is Glutamate/gamma-aminobutyrate antiporter (503 aa).

Residue 33-43 coordinates L-glutamate; sequence LHLVFFLLLGG. A run of 7 helical transmembrane segments spans residues 35–55, 153–173, 194–214, 232–252, 366–386, 407–427, and 440–460; these read LVFFLLLGGLLWFLPVALCAA, FVVGIVIPSIILFGLAAAYFI, VSTLVVFVSFILAYMGVEASA, ILLVILAISLDAIGGFSVAAV, LTVVIYLVGYLLFFIGYFVLI, IIAGIGFLLSIFALFISFVPP, and MILLISFVVTAILPFIVYELH.

This sequence belongs to the amino acid-polyamine-organocation (APC) superfamily. Glutamate:GABA antiporter (GGA) (TC 2.A.3.7) family.

Its subcellular location is the cell membrane. The catalysed reaction is 4-aminobutanoate(in) + L-glutamate(out) = 4-aminobutanoate(out) + L-glutamate(in). Involved in glutaminase-dependent acid resistance. Exchanges extracellular glutamate (Glu) for intracellular gamma-aminobutyric acid (GABA) under acidic conditions. The polypeptide is Glutamate/gamma-aminobutyrate antiporter (gadC) (Lactococcus lactis subsp. lactis (strain IL1403) (Streptococcus lactis)).